The primary structure comprises 478 residues: Protein nucleotidyltransferase YdiU (478 aa).

Positions 84, 86, 87, 107, 119, 120, 170, and 177 each coordinate ATP. Asp-246 (proton acceptor) is an active-site residue. Residues Asn-247 and Asp-256 each contribute to the Mg(2+) site. Asp-256 is a binding site for ATP.

Belongs to the SELO family. The cofactor is Mg(2+). Mn(2+) serves as cofactor.

It carries out the reaction L-seryl-[protein] + ATP = 3-O-(5'-adenylyl)-L-seryl-[protein] + diphosphate. It catalyses the reaction L-threonyl-[protein] + ATP = 3-O-(5'-adenylyl)-L-threonyl-[protein] + diphosphate. The catalysed reaction is L-tyrosyl-[protein] + ATP = O-(5'-adenylyl)-L-tyrosyl-[protein] + diphosphate. The enzyme catalyses L-histidyl-[protein] + UTP = N(tele)-(5'-uridylyl)-L-histidyl-[protein] + diphosphate. It carries out the reaction L-seryl-[protein] + UTP = O-(5'-uridylyl)-L-seryl-[protein] + diphosphate. It catalyses the reaction L-tyrosyl-[protein] + UTP = O-(5'-uridylyl)-L-tyrosyl-[protein] + diphosphate. Nucleotidyltransferase involved in the post-translational modification of proteins. It can catalyze the addition of adenosine monophosphate (AMP) or uridine monophosphate (UMP) to a protein, resulting in modifications known as AMPylation and UMPylation. The sequence is that of Protein nucleotidyltransferase YdiU from Shigella boydii serotype 18 (strain CDC 3083-94 / BS512).